A 516-amino-acid chain; its full sequence is L-amino acid oxidase (516 aa).

The first 18 residues, 1–18 (MNVFFMFSLLFLAALESC), serve as a signal peptide directing secretion. FAD-binding positions include 61–62 (MS), 81–82 (EA), Arg-89, and 105–108 (GPMR). Residue Arg-108 participates in substrate binding. An N-linked (GlcNAc...) asparagine glycan is attached at Asn-190. Residue Val-279 participates in FAD binding. Asn-299 and Asn-404 each carry an N-linked (GlcNAc...) asparagine glycan. A disulfide bond links Cys-349 and Cys-430. FAD is bound by residues Glu-475 and 482 to 487 (GWIDST). Residue 482–483 (GW) coordinates substrate.

Belongs to the flavin monoamine oxidase family. FIG1 subfamily. In terms of assembly, homodimer; non-covalently linked. The cofactor is FAD. In terms of processing, N-glycosylated (14%). The enzymatic activity remains unchanged after deglycosylation. Expressed by the venom gland.

The protein localises to the secreted. The catalysed reaction is an L-alpha-amino acid + O2 + H2O = a 2-oxocarboxylate + H2O2 + NH4(+). It carries out the reaction L-leucine + O2 + H2O = 4-methyl-2-oxopentanoate + H2O2 + NH4(+). The enzyme catalyses L-phenylalanine + O2 + H2O = 3-phenylpyruvate + H2O2 + NH4(+). It catalyses the reaction L-tryptophan + O2 + H2O = indole-3-pyruvate + H2O2 + NH4(+). The catalysed reaction is L-methionine + O2 + H2O = 4-methylsulfanyl-2-oxobutanoate + H2O2 + NH4(+). It carries out the reaction L-isoleucine + O2 + H2O = (S)-3-methyl-2-oxopentanoate + H2O2 + NH4(+). With respect to regulation, inhibited by the substrate analog N-acetyl tryptophan. Functionally, catalyzes an oxidative deamination of predominantly hydrophobic and aromatic L-amino acids, thus producing hydrogen peroxide that may contribute to the diverse toxic effects of this enzyme. Is highly active on L-Met&gt;L-Leu&gt;L-Phe&gt;L-Trp=L-Ile. Binds to the cell surface and enables the production of highly localized concentration of hydrogen peroxide in or near the binding interfaces. Does not bind to phospholipids. Induces platelet-rich plasma aggregation, shows cytotoxic effects on some cancer cell lines (B16-F10 (mouse melanoma), PC12 (rat pheochromocytoma), MCF-7 and MDA-MB-231 (human breast carcinoma)) and shows antibacterial activities against both Gram-positive and Gram-negative bacteria. Also exhibits hemorrhage and edema. Does not show cytotoxicity on erythrocytes and peripheral blood mononuclear cells. Its effect on platelets is controversial, since it either induces aggregation or inhibits agonist-induced aggregation. These different effects are probably due to different experimental conditions. This chain is L-amino acid oxidase, found in Cerastes cerastes (Horned desert viper).